We begin with the raw amino-acid sequence, 426 residues long: Trigger factor (426 aa).

The PPIase FKBP-type domain maps to 165–239 (GDVYKLNEAG…ISEIKRLELP (75 aa)).

This sequence belongs to the FKBP-type PPIase family. Tig subfamily.

It localises to the cytoplasm. The enzyme catalyses [protein]-peptidylproline (omega=180) = [protein]-peptidylproline (omega=0). In terms of biological role, involved in protein export. Acts as a chaperone by maintaining the newly synthesized protein in an open conformation. Functions as a peptidyl-prolyl cis-trans isomerase. This chain is Trigger factor, found in Pelodictyon phaeoclathratiforme (strain DSM 5477 / BU-1).